The following is a 209-amino-acid chain: Probable chalcone--flavanone isomerase 3 (209 aa).

The protein belongs to the chalcone isomerase family.

It catalyses the reaction a chalcone = a flavanone.. It functions in the pathway secondary metabolite biosynthesis; flavonoid biosynthesis. Functionally, involved in anthocyanin biosynthesis. The sequence is that of Probable chalcone--flavanone isomerase 3 (CHI3) from Arabidopsis thaliana (Mouse-ear cress).